Reading from the N-terminus, the 752-residue chain is F-box and WD repeat domain containing protein 10B (752 aa).

WD repeat units lie at residues Gly169–Pro206, Gly451–Ile490, Gly493–Arg532, Lys534–Thr569, Gly572–Leu609, and Ala611–Lys652.

In terms of tissue distribution, expressed in pancreas, heart and skeletal muscle.

The sequence is that of F-box and WD repeat domain containing protein 10B from Homo sapiens (Human).